The chain runs to 436 residues: Trigger factor (436 aa).

A PPIase FKBP-type domain is found at glycine 163–proline 248.

It belongs to the FKBP-type PPIase family. Tig subfamily.

It is found in the cytoplasm. It catalyses the reaction [protein]-peptidylproline (omega=180) = [protein]-peptidylproline (omega=0). Involved in protein export. Acts as a chaperone by maintaining the newly synthesized protein in an open conformation. Functions as a peptidyl-prolyl cis-trans isomerase. In Bordetella parapertussis (strain 12822 / ATCC BAA-587 / NCTC 13253), this protein is Trigger factor.